Consider the following 113-residue polypeptide: Hydrogenase maturation factor HybF (113 aa).

2 residues coordinate Ni(2+): histidine 2 and glutamate 3. The Zn(2+) site is built by cysteine 73, cysteine 76, cysteine 89, and cysteine 92.

The protein belongs to the HypA/HybF family. HybF subfamily. As to quaternary structure, monomer.

Functionally, involved in the maturation of [NiFe] hydrogenases. Required for nickel insertion into the metal center of the hydrogenase. HybF is involved in maturation of hydrogenases 1 and 2. It may partially substitute for the function of HypA and vice versa. The polypeptide is Hydrogenase maturation factor HybF (Escherichia coli (strain K12)).